A 66-amino-acid chain; its full sequence is Large ribosomal subunit protein bL35 (66 aa).

The protein belongs to the bacterial ribosomal protein bL35 family.

This chain is Large ribosomal subunit protein bL35, found in Beijerinckia indica subsp. indica (strain ATCC 9039 / DSM 1715 / NCIMB 8712).